We begin with the raw amino-acid sequence, 576 residues long: Arginine--tRNA ligase (576 aa).

A 'HIGH' region motif is present at residues 122 to 132; it reads PNVAKEMHVGH.

Belongs to the class-I aminoacyl-tRNA synthetase family. Monomer.

It is found in the cytoplasm. It carries out the reaction tRNA(Arg) + L-arginine + ATP = L-arginyl-tRNA(Arg) + AMP + diphosphate. In Sodalis glossinidius (strain morsitans), this protein is Arginine--tRNA ligase.